The following is a 334-amino-acid chain: Nucleoid-associated protein YPK_2796 (334 aa).

This sequence belongs to the YejK family.

The protein resides in the cytoplasm. It is found in the nucleoid. This Yersinia pseudotuberculosis serotype O:3 (strain YPIII) protein is Nucleoid-associated protein YPK_2796.